The chain runs to 171 residues: NADH-quinone oxidoreductase subunit I (171 aa).

4Fe-4S ferredoxin-type domains lie at 41–71 (LTRD…VVKT) and 81–110 (ESFT…LTPD). Positions 51, 54, 57, 61, 90, 93, 96, and 100 each coordinate [4Fe-4S] cluster.

The protein belongs to the complex I 23 kDa subunit family. In terms of assembly, NDH-1 is composed of 13 different subunits. Subunits NuoA, H, J, K, L, M, N constitute the membrane sector of the complex. The cofactor is [4Fe-4S] cluster.

It localises to the cell inner membrane. The catalysed reaction is a quinone + NADH + 5 H(+)(in) = a quinol + NAD(+) + 4 H(+)(out). NDH-1 shuttles electrons from NADH, via FMN and iron-sulfur (Fe-S) centers, to quinones in the respiratory chain. The immediate electron acceptor for the enzyme in this species is believed to be ubiquinone. Couples the redox reaction to proton translocation (for every two electrons transferred, four hydrogen ions are translocated across the cytoplasmic membrane), and thus conserves the redox energy in a proton gradient. This Shewanella woodyi (strain ATCC 51908 / MS32) protein is NADH-quinone oxidoreductase subunit I.